We begin with the raw amino-acid sequence, 195 residues long: Imidazoleglycerol-phosphate dehydratase (195 aa).

The protein belongs to the imidazoleglycerol-phosphate dehydratase family.

The protein localises to the cytoplasm. It catalyses the reaction D-erythro-1-(imidazol-4-yl)glycerol 3-phosphate = 3-(imidazol-4-yl)-2-oxopropyl phosphate + H2O. Its pathway is amino-acid biosynthesis; L-histidine biosynthesis; L-histidine from 5-phospho-alpha-D-ribose 1-diphosphate: step 6/9. This Cereibacter sphaeroides (strain ATCC 17023 / DSM 158 / JCM 6121 / CCUG 31486 / LMG 2827 / NBRC 12203 / NCIMB 8253 / ATH 2.4.1.) (Rhodobacter sphaeroides) protein is Imidazoleglycerol-phosphate dehydratase.